Reading from the N-terminus, the 455-residue chain is Glycylpeptide N-tetradecanoyltransferase (455 aa).

38–41 (HKFW) provides a ligand contact to tetradecanoyl-CoA. Positions 168–204 (INFLCVHKQLRSKRLTPVLIKEITRRVNKCDIWHALY) are myristoyl CoA-binding. Leucine 455 (proton acceptor; via carboxylate) is an active-site residue.

The protein belongs to the NMT family. Monomer. In terms of processing, the N-terminus is blocked.

Its subcellular location is the cytoplasm. It carries out the reaction N-terminal glycyl-[protein] + tetradecanoyl-CoA = N-tetradecanoylglycyl-[protein] + CoA + H(+). With respect to regulation, inhibited by diethylpyrocarbonate. Competitively inhibited by S-(2-oxo)pentadecyl-CoA, a non hydrolysable myristoyl-CoA analog, and by SC-58272, a peptidomimetic derived from the N-terminal sequence of a natural substrate. Its function is as follows. Adds a myristoyl group to the N-terminal glycine residue of certain cellular proteins. Substrate specificity requires an N-terminal glycine in the nascent polypeptide substrates. Uncharged amino acids are preferred at position 2 while neutral residues are favored at positions 3 and 4. Ser is present at position 5 in almost all known N-myristoyl proteins and Lys is commonly encountered at postion 6. The sequence is that of Glycylpeptide N-tetradecanoyltransferase (NMT1) from Saccharomyces cerevisiae (strain ATCC 204508 / S288c) (Baker's yeast).